A 229-amino-acid polypeptide reads, in one-letter code: Ribonuclease 3 (229 aa).

Residues 5-127 form the RNase III domain; sequence LDRLERKLGY…LIGAIYLDTG (123 aa). Mg(2+) is bound at residue Glu40. Residue Asp44 is part of the active site. Mg(2+) is bound by residues Asp113 and Glu116. Residue Glu116 is part of the active site. The DRBM domain maps to 154-224; it reads DPKTRLQEFL…AAAALVALGV (71 aa).

It belongs to the ribonuclease III family. Homodimer. It depends on Mg(2+) as a cofactor.

It localises to the cytoplasm. It catalyses the reaction Endonucleolytic cleavage to 5'-phosphomonoester.. Functionally, digests double-stranded RNA. Involved in the processing of primary rRNA transcript to yield the immediate precursors to the large and small rRNAs (23S and 16S). Processes some mRNAs, and tRNAs when they are encoded in the rRNA operon. Processes pre-crRNA and tracrRNA of type II CRISPR loci if present in the organism. The chain is Ribonuclease 3 from Pseudomonas aeruginosa (strain LESB58).